The primary structure comprises 197 residues: Small ribosomal subunit protein uS4c (197 aa).

The 62-residue stretch at 92 to 153 folds into the S4 RNA-binding domain; sequence MRLDAVVYRL…APIVEHAKTF (62 aa).

The protein belongs to the universal ribosomal protein uS4 family. As to quaternary structure, part of the 30S ribosomal subunit. Contacts protein S5. The interaction surface between S4 and S5 is involved in control of translational fidelity.

The protein localises to the plastid. It localises to the chloroplast. Functionally, one of the primary rRNA binding proteins, it binds directly to 16S rRNA where it nucleates assembly of the body of the 30S subunit. With S5 and S12 plays an important role in translational accuracy. In Ostreococcus tauri, this protein is Small ribosomal subunit protein uS4c (rps4).